The sequence spans 447 residues: Argininosuccinate synthase (447 aa).

ATP-binding positions include 17-25 (AFSGGLDTS) and Ala43. Position 99 (Tyr99) interacts with L-citrulline. Positions 129 and 131 each coordinate ATP. Thr131, Asn135, and Asp136 together coordinate L-aspartate. Asn135 is a binding site for L-citrulline. Residue Asp136 participates in ATP binding. Residues Arg139 and Ser192 each coordinate L-citrulline. Residue Asp194 participates in ATP binding. L-citrulline is bound by residues Thr201, Glu203, and Glu280.

This sequence belongs to the argininosuccinate synthase family. Type 2 subfamily. Homotetramer.

It is found in the cytoplasm. It catalyses the reaction L-citrulline + L-aspartate + ATP = 2-(N(omega)-L-arginino)succinate + AMP + diphosphate + H(+). It functions in the pathway amino-acid biosynthesis; L-arginine biosynthesis; L-arginine from L-ornithine and carbamoyl phosphate: step 2/3. This is Argininosuccinate synthase from Escherichia coli O9:H4 (strain HS).